The following is a 428-amino-acid chain: Glutamate-1-semialdehyde 2,1-aminomutase 2 (428 aa).

N6-(pyridoxal phosphate)lysine is present on Lys-267.

It belongs to the class-III pyridoxal-phosphate-dependent aminotransferase family. HemL subfamily. In terms of assembly, homodimer. Pyridoxal 5'-phosphate is required as a cofactor.

The protein resides in the cytoplasm. The enzyme catalyses (S)-4-amino-5-oxopentanoate = 5-aminolevulinate. Its pathway is porphyrin-containing compound metabolism; protoporphyrin-IX biosynthesis; 5-aminolevulinate from L-glutamyl-tRNA(Glu): step 2/2. The protein is Glutamate-1-semialdehyde 2,1-aminomutase 2 of Oceanobacillus iheyensis (strain DSM 14371 / CIP 107618 / JCM 11309 / KCTC 3954 / HTE831).